The primary structure comprises 384 residues: Substance-K receptor (384 aa).

Over 1 to 32 the chain is Extracellular; that stretch reads MGGRAIVTDTNIFSGLESNTTGVTAFSMPAWQ. Asn-19 carries N-linked (GlcNAc...) asparagine glycosylation. The helical transmembrane segment at 33-56 threads the bilayer; it reads LALWATAYLGLVLVAVTGNATVIW. The Cytoplasmic segment spans residues 57–69; it reads IILAHERMRTVTN. Residues 70–90 traverse the membrane as a helical segment; sequence YFIINLALADLCMAAFNATFN. At 91 to 107 the chain is on the extracellular side; the sequence is FVYASHNIWYFGRAFCY. Residues Cys-106 and Cys-181 are joined by a disulfide bond. A helical transmembrane segment spans residues 108 to 129; the sequence is FQNLFPITAMFVSIYSMTAIAA. Residues 130–149 are Cytoplasmic-facing; the sequence is DRYMAIVHPFQPRLSAPITK. Residues 150–170 traverse the membrane as a helical segment; it reads ATIAGIWLVALALASPQCFYS. Residues 171–196 are Extracellular-facing; that stretch reads TITVDQGATKCVVAWPNDNGGKMLLL. The helical transmembrane segment at 197-218 threads the bilayer; the sequence is YHLVVFVLVYFLPLVVMFVAYS. At 219 to 251 the chain is on the cytoplasmic side; it reads VIGLTLWKRAVPRHQAHGANLRHLHAKKKFVKA. Residues 252 to 272 form a helical membrane-spanning segment; sequence MVLVVLTFAICWLPYHLYFIL. Over 273–290 the chain is Extracellular; the sequence is GSFQKDIYYRKFIQQVYL. The chain crosses the membrane as a helical span at residues 291–310; the sequence is ALFWLAMSSTMYNPIIYCCL. The Cytoplasmic portion of the chain corresponds to 311–384; it reads NHRFRSGFRL…SPQDVEPAAP (74 aa). The S-palmitoyl cysteine moiety is linked to residue Cys-324.

Belongs to the G-protein coupled receptor 1 family.

The protein resides in the cell membrane. In terms of biological role, this is a receptor for the tachykinin neuropeptide substance K (neurokinin A). It is associated with G proteins that activate a phosphatidylinositol-calcium second messenger system. The rank order of affinity of this receptor to tachykinins is: substance K &gt; neuromedin-K &gt; substance P. The protein is Substance-K receptor (TACR2) of Mesocricetus auratus (Golden hamster).